The chain runs to 203 residues: Orotate phosphoribosyltransferase (203 aa).

5-phospho-alpha-D-ribose 1-diphosphate is bound by residues R94, K98, H100, and 120–128 (EDLISTGGS). Residue S124 participates in orotate binding.

The protein belongs to the purine/pyrimidine phosphoribosyltransferase family. PyrE subfamily. In terms of assembly, homodimer. It depends on Mg(2+) as a cofactor.

It carries out the reaction orotidine 5'-phosphate + diphosphate = orotate + 5-phospho-alpha-D-ribose 1-diphosphate. It participates in pyrimidine metabolism; UMP biosynthesis via de novo pathway; UMP from orotate: step 1/2. Its function is as follows. Catalyzes the transfer of a ribosyl phosphate group from 5-phosphoribose 1-diphosphate to orotate, leading to the formation of orotidine monophosphate (OMP). The polypeptide is Orotate phosphoribosyltransferase (Staphylococcus aureus (strain MSSA476)).